The chain runs to 881 residues: Alanine--tRNA ligase (881 aa).

Zn(2+)-binding residues include histidine 563, histidine 567, cysteine 672, and histidine 676.

It belongs to the class-II aminoacyl-tRNA synthetase family. Requires Zn(2+) as cofactor.

Its subcellular location is the cytoplasm. It catalyses the reaction tRNA(Ala) + L-alanine + ATP = L-alanyl-tRNA(Ala) + AMP + diphosphate. Catalyzes the attachment of alanine to tRNA(Ala) in a two-step reaction: alanine is first activated by ATP to form Ala-AMP and then transferred to the acceptor end of tRNA(Ala). Also edits incorrectly charged Ser-tRNA(Ala) and Gly-tRNA(Ala) via its editing domain. In Azorhizobium caulinodans (strain ATCC 43989 / DSM 5975 / JCM 20966 / LMG 6465 / NBRC 14845 / NCIMB 13405 / ORS 571), this protein is Alanine--tRNA ligase.